The primary structure comprises 617 residues: Bifunctional TH2 protein, mitochondrial (617 aa).

A mitochondrion-targeting transit peptide spans 1-28 (MRFLFPTRLINNSSLGLLRSPHTTAPIR). Residue Asp107 participates in substrate binding. The active-site Nucleophile is Cys213. Positions 217 and 244 each coordinate substrate. Glu286 serves as the catalytic Proton donor.

It in the N-terminal section; belongs to the TenA family. In the C-terminal section; belongs to the HAD-like hydrolase superfamily.

It is found in the mitochondrion. Its subcellular location is the cytoplasm. It carries out the reaction thiamine phosphate + H2O = thiamine + phosphate. The enzyme catalyses 4-amino-5-aminomethyl-2-methylpyrimidine + H2O = 4-amino-5-hydroxymethyl-2-methylpyrimidine + NH4(+). Functionally, may be involved in the salvage of thiamine breakdown products. This protein has a haloacid dehalogenase family domain fused to its TenA domain. Phosphatase with the highest activity against thiamine monophosphate (ThMP) and, with a lower activity, against thiamine diphosphate (ThDP), flavin mononucleotide, inorganic pyrophosphate, CTP and dATP. Has a thiamine salvage hydrolase activity, but only against 4-amino-5-aminomethyl-2-methylpyrimidine (amino-HMP) and not against N-formylamino-HMP, desthiothiamine, thiamine, ThMP, and ThDP. The polypeptide is Bifunctional TH2 protein, mitochondrial (Arabidopsis thaliana (Mouse-ear cress)).